Consider the following 573-residue polypeptide: Cytochrome P450 monooxygenase GME11363 (573 aa).

The chain crosses the membrane as a helical span at residues 10–30; sequence IGVVAAVLLAALILLYRAALP. Cysteine 519 is a binding site for heme.

It belongs to the cytochrome P450 family. It depends on heme as a cofactor.

The protein localises to the membrane. Its pathway is secondary metabolite biosynthesis. Its function is as follows. Cytochrome P450 monooxygenase; part of the gene cluster that mediates the biosynthesis of dibenzodioxocinones such as pestalotiollide B, a novel class of inhibitors against cholesterol ester transfer protein (CEPT). The biosynthesis initiates from condensation of acetate and malonate units catalyzed by the non-reducing PKS pks8/GME11356. Pks8/GME11356 lacks a thioesterase (TE) domain, which is important to the cyclizing of the third ring of atrochrysone carboxylic acid, and the esterase GME11355 might play the role of TE and catalyzes the cyclization reaction of the C ring. The lactamase-like protein GME11357 (or other beta-lactamases in Pestalotiopsis microspora) probably hydrolyzes the thioester bond between the ACP of pks8/GME11356 and the intermediate to release atrochrysone carboxylic acid, which is spontaneously dehydrates to form endocrocin anthrone. Endocrocin anthrone is further converted to emodin via the endocrocin intermediate. Emodin is then oxidized by several enzymes such as the Baeyer-Villiger oxidase GME11358, the oxidoreductase GME11367, the short chain dehydrogenase/reductase GME11373, as well as by other oxidoreductases from the cluster, to modify the A and C rings and open the B ring, and finally yield monodictyphenone. The prenyltransferase GME11375 may catalyze the addition reaction between the C5 side chains and the carbon bone of dibenzodioxocinones. The remaining biochemical reactions to the final product dibenzodioxocinones should be methylation catalyzed by methyltransferase GME11366 and reduction and lactonization reaction catalyzed by a series of oxidordeuctases. This Pestalotiopsis microspora protein is Cytochrome P450 monooxygenase GME11363.